The sequence spans 261 residues: Small ribosomal subunit protein uS2 (261 aa).

Positions Glu223 to Asp261 are disordered.

Belongs to the universal ribosomal protein uS2 family.

The polypeptide is Small ribosomal subunit protein uS2 (Lactobacillus johnsonii (strain CNCM I-12250 / La1 / NCC 533)).